The sequence spans 392 residues: Putative cystathionine gamma-lyase (392 aa).

Positions 1–10 are enriched in polar residues; sequence MSDSATTDSA. The disordered stretch occupies residues 1 to 41; it reads MSDSATTDSAGTGGERSASAPGDGTRAVRAGLPEPVKHEPT. Lysine 216 is modified (N6-(pyridoxal phosphate)lysine).

It belongs to the trans-sulfuration enzymes family. Pyridoxal 5'-phosphate serves as cofactor.

It is found in the cytoplasm. It catalyses the reaction L,L-cystathionine + H2O = 2-oxobutanoate + L-cysteine + NH4(+). It functions in the pathway amino-acid biosynthesis; L-cysteine biosynthesis; L-cysteine from L-homocysteine and L-serine: step 2/2. In Streptomyces coelicolor (strain ATCC BAA-471 / A3(2) / M145), this protein is Putative cystathionine gamma-lyase (cysA).